Reading from the N-terminus, the 75-residue chain is Tautomerase PptA (75 aa).

Catalysis depends on P2, which acts as the Proton acceptor; via imino nitrogen.

It belongs to the 4-oxalocrotonate tautomerase family. PptA subfamily. Homodimer.

The protein localises to the cytoplasm. This chain is Tautomerase PptA, found in Klebsiella pneumoniae subsp. pneumoniae (strain ATCC 700721 / MGH 78578).